The sequence spans 325 residues: DNA repair and recombination protein RadA (325 aa).

Residue 107-114 (GEFGSGKT) participates in ATP binding.

The protein belongs to the eukaryotic RecA-like protein family.

Its function is as follows. Involved in DNA repair and in homologous recombination. Binds and assemble on single-stranded DNA to form a nucleoprotein filament. Hydrolyzes ATP in a ssDNA-dependent manner and promotes DNA strand exchange between homologous DNA molecules. The chain is DNA repair and recombination protein RadA from Methanococcoides burtonii (strain DSM 6242 / NBRC 107633 / OCM 468 / ACE-M).